The primary structure comprises 124 residues: MSDTLRRLGEVLESRKLANGGDPEKSYIARLFHKGDDAILKKIGEEATETVMAAKDARAAGMTDEARGKVVYEVADLWFHTMVLLSHFDLTPDDVVNELARREGLSGLEEKALRKSQARDAAGD.

It belongs to the PRA-PH family.

Its subcellular location is the cytoplasm. The catalysed reaction is 1-(5-phospho-beta-D-ribosyl)-ATP + H2O = 1-(5-phospho-beta-D-ribosyl)-5'-AMP + diphosphate + H(+). It functions in the pathway amino-acid biosynthesis; L-histidine biosynthesis; L-histidine from 5-phospho-alpha-D-ribose 1-diphosphate: step 2/9. The polypeptide is Phosphoribosyl-ATP pyrophosphatase (hisE) (Ralstonia nicotianae (strain ATCC BAA-1114 / GMI1000) (Ralstonia solanacearum)).